The sequence spans 516 residues: Monocarboxylate transporter 12 (516 aa).

Residues 1-50 (MPSGSHWTANSSKIITWLLEQPGKEEKRKTMAKVNRARSTSPPDGGWGWM) are Cytoplasmic-facing. Helical transmembrane passes span 51–73 (IVAGCFLVTICTRAVTRCISIFF), 88–108 (AWIHSIVDCVTMLCAPLGSVV), 116–136 (VGIMLGGLLASTGLILSSFAT), 145–165 (LGVLTGLGFALCYSPAIAMVG), 178–198 (IAMSGSGIGTFILAPVVQLLI), 207–227 (LLILGGFVLNLCVCGALMRPI), 283–303 (FVVLAVSVLFMAYGCSPLFVY), 319–339 (AFLMSILGVIDIIGNITFGWL), 350–370 (YVCYLFAVGMDGLCYLCLPML), 377–397 (VPFSCTFGYFDGAYVTLIPVV), 410–430 (ALGVVYFLHAVPYLVSPPIAG), and 440–460 (TAAFLLCGFSMIFSSVLLGFA). Residues 461–516 (RLIKRMRKTQLQFIAKESDPKLQLWTNGSVAYSVARELDQKHGEPVATAVPGYSLT) lie on the Cytoplasmic side of the membrane.

Belongs to the major facilitator superfamily. Monocarboxylate porter (TC 2.A.1.13) family. In terms of assembly, interacts with isoform 2 of BSG; this interaction is required for its localization to the plasma membrane. In terms of tissue distribution, most highly expressed in kidney, followed by retina, lung, heart and testis. Very weakly expressed in brain and liver. Also detected in lens.

Its subcellular location is the cell membrane. The protein resides in the basolateral cell membrane. The enzyme catalyses creatine(in) = creatine(out). It carries out the reaction guanidinoacetate(in) = guanidinoacetate(out). Its activity is regulated as follows. Creatine uptake is inhibited by carbonyl cyanide 3-chlorophenylhydrazone (CCCP) and by valinomycin. In terms of biological role, functions as a transporter for creatine and as well for its precursor guanidinoacetate. Transport of creatine and GAA is independent of resting membrane potential and extracellular Na(+), Cl(-), or pH. Contributes to the process of creatine biosynthesis and distribution. The sequence is that of Monocarboxylate transporter 12 from Homo sapiens (Human).